Consider the following 276-residue polypeptide: Undecaprenyl-diphosphatase (276 aa).

6 helical membrane passes run 43–63, 85–105, 109–129, 184–204, 218–238, and 254–274; these read RAMAFNIIIQLGAILAVVWEF, INLLIAFLPAVVLGVIFADLI, LFNPITVATALVVGGLIMLWA, ATEFSFFLAMPTMVGAAVYSG, VFAIGFVTAFVFAMIAVKGLL, and IAFGLLILATWQFGWVDWTAA.

Belongs to the UppP family.

Its subcellular location is the cell inner membrane. It catalyses the reaction di-trans,octa-cis-undecaprenyl diphosphate + H2O = di-trans,octa-cis-undecaprenyl phosphate + phosphate + H(+). Catalyzes the dephosphorylation of undecaprenyl diphosphate (UPP). Confers resistance to bacitracin. The protein is Undecaprenyl-diphosphatase of Pseudomonas fluorescens (strain ATCC BAA-477 / NRRL B-23932 / Pf-5).